A 352-amino-acid polypeptide reads, in one-letter code: Molybdenum import ATP-binding protein ModC (352 aa).

Residues 1-229 (MLELNFSQTL…SVMHPWLPKE (229 aa)) enclose the ABC transporter domain. 31 to 38 (GVSGAGKT) is an ATP binding site. In terms of domain architecture, Mop spans 289–352 (QTSIRNVLRA…AQVKSVSITA (64 aa)).

Belongs to the ABC transporter superfamily. Molybdate importer (TC 3.A.1.8) family. In terms of assembly, the complex is composed of two ATP-binding proteins (ModC), two transmembrane proteins (ModB) and a solute-binding protein (ModA).

The protein localises to the cell inner membrane. The enzyme catalyses molybdate(out) + ATP + H2O = molybdate(in) + ADP + phosphate + H(+). In terms of biological role, part of the ABC transporter complex ModABC involved in molybdenum import. Responsible for energy coupling to the transport system. This chain is Molybdenum import ATP-binding protein ModC, found in Salmonella typhi.